A 184-amino-acid polypeptide reads, in one-letter code: ATP synthase subunit b, chloroplastic (184 aa).

A helical membrane pass occupies residues 27–49; that stretch reads LATNPINLSVVLGVLIFFGKGVL.

Belongs to the ATPase B chain family. In terms of assembly, F-type ATPases have 2 components, F(1) - the catalytic core - and F(0) - the membrane proton channel. F(1) has five subunits: alpha(3), beta(3), gamma(1), delta(1), epsilon(1). F(0) has four main subunits: a(1), b(1), b'(1) and c(10-14). The alpha and beta chains form an alternating ring which encloses part of the gamma chain. F(1) is attached to F(0) by a central stalk formed by the gamma and epsilon chains, while a peripheral stalk is formed by the delta, b and b' chains.

The protein resides in the plastid. Its subcellular location is the chloroplast thylakoid membrane. Its function is as follows. F(1)F(0) ATP synthase produces ATP from ADP in the presence of a proton or sodium gradient. F-type ATPases consist of two structural domains, F(1) containing the extramembraneous catalytic core and F(0) containing the membrane proton channel, linked together by a central stalk and a peripheral stalk. During catalysis, ATP synthesis in the catalytic domain of F(1) is coupled via a rotary mechanism of the central stalk subunits to proton translocation. Functionally, component of the F(0) channel, it forms part of the peripheral stalk, linking F(1) to F(0). This is ATP synthase subunit b, chloroplastic from Gossypium barbadense (Sea Island cotton).